A 276-amino-acid chain; its full sequence is MLTAHHLDVARRHDTILRDLSLSIEPGRVTALLGRNGAGKSTLLKTFAGELTGSVAPHGVRVTGDVTLNGEPLARIDAPRLACLRAVLPQAAQPAFPFSVDEIVLLGRYPHARRSGARHVIAHRDRDIAWRALERAGADALVGRDVTTLSGGELARVQFARVLAQLWPDHDATESGPRYLLLDEPTAALDLAHQHRLLDTVRAVAREWQLGVLAIVHDPNLAARHADTIAMLADGTIVAHGAPRDVMTPAHIAQCYGFAVKMVETGDGTPPVMVPA.

Positions 2-259 (LTAHHLDVAR…AHIAQCYGFA (258 aa)) constitute an ABC transporter domain. ATP is bound at residue 34–41 (GRNGAGKS).

The protein belongs to the ABC transporter superfamily. Heme (hemin) importer (TC 3.A.1.14.5) family. In terms of assembly, the complex is composed of two ATP-binding proteins (HmuV), two transmembrane proteins (HmuU) and a solute-binding protein (HmuT).

The protein resides in the cell inner membrane. Functionally, part of the ABC transporter complex HmuTUV involved in hemin import. Responsible for energy coupling to the transport system. The sequence is that of Hemin import ATP-binding protein HmuV from Burkholderia cenocepacia (strain HI2424).